We begin with the raw amino-acid sequence, 252 residues long: MTTIDLNSDLGESYGSWVMGNDVAVLDLVSSANIACGFHAGDATVLFKTVRAAHARHVRIGAHIGYNDIAGFGRRNLDIAHDDLVAETIYQIGAIQAAAKASGAVVEYVKPHGALYNTIAVDEAQAAAVIEGIKLVNPELSLMALAGSQIVEQARAVGLQVEQETFADRAYTADGQLVSRKLPGAVLHDPETAARQALAFATGQPITAITGESVLVDANSICVHGDNPQALALVEKIVTTLAAHEVQVSHAR.

This sequence belongs to the LamB/PxpA family. As to quaternary structure, forms a complex composed of PxpA, PxpB and PxpC.

The enzyme catalyses 5-oxo-L-proline + ATP + 2 H2O = L-glutamate + ADP + phosphate + H(+). Catalyzes the cleavage of 5-oxoproline to form L-glutamate coupled to the hydrolysis of ATP to ADP and inorganic phosphate. The sequence is that of 5-oxoprolinase subunit A from Corynebacterium glutamicum (strain ATCC 13032 / DSM 20300 / JCM 1318 / BCRC 11384 / CCUG 27702 / LMG 3730 / NBRC 12168 / NCIMB 10025 / NRRL B-2784 / 534).